Consider the following 590-residue polypeptide: uncharacterized protein (590 aa).

Topologically, residues 1–68 (MKFSKPKFSM…SQRVWGPWNY (68 aa)) are cytoplasmic. Residues 69 to 89 (VAFWLADSVNVNTWMIAGTAV) traverse the membrane as a helical segment. At 90 to 94 (ESGLS) the chain is on the extracellular side. The helical transmembrane segment at 95–115 (WWEAWITVWVGYTIAAFILTI) threads the bilayer. Topologically, residues 116–124 (AGRAGAVYH) are cytoplasmic. Residues 125 to 145 (ISFPVLSRSSFGIWGSLWPIL) traverse the membrane as a helical segment. At 146 to 149 (NRAV) the chain is on the extracellular side. A helical membrane pass occupies residues 150–170 (MACVWYGVQAWIGGECVTLMI). Residues 171 to 194 (RSIWPSFSHIPNTMAKSGTETYQW) lie on the Cytoplasmic side of the membrane. The chain crosses the membrane as a helical span at residues 195 to 215 (VGFFIFWLISNVAIWFPVYQI). Residues 216 to 218 (RHL) lie on the Extracellular side of the membrane. Residues 219–239 (FTAKSFLAPPAAIAFLIWALV) traverse the membrane as a helical segment. Over 240-258 (KAHGAGDAIHAKTQLSTWN) the chain is Cytoplasmic. Residues 259-279 (HGWAVTAGIISCLDNFATLIV) form a helical membrane-spanning segment. Topologically, residues 280-298 (NNPDFTRFATTPNAPIFPQ) are extracellular. The helical transmembrane segment at 299–319 (LITIPMGFGITTLIGVLVGSA) threads the bilayer. Residues 320–390 (SKSIYGENIW…LCPMFINIRR (71 aa)) lie on the Cytoplasmic side of the membrane. A helical membrane pass occupies residues 391–411 (GGYIASIIGICMCPWNLLSSS). Topologically, residues 412 to 418 (NSFANSL) are extracellular. A helical membrane pass occupies residues 419-439 (SAYAVFLSSFAGILIADYFVI). Residues 440 to 467 (RKGYLKVDALYTINPNEPYWFTYGINLR) lie on the Cytoplasmic side of the membrane. The chain crosses the membrane as a helical span at residues 468 to 488 (AFASYICGLLINVVGLAGAVG). Residues 489 to 500 (DKVPKAALTMNN) lie on the Extracellular side of the membrane. Residues 501-521 (IAYLLGIVTSFLSHLIICKIF) traverse the membrane as a helical segment. Topologically, residues 522–590 (PVTACGEKFL…GIDIKESSVF (69 aa)) are cytoplasmic. Positions 566–590 (VSYDSKEKSDDGKSGGIDIKESSVF) are disordered.

The protein belongs to the purine-cytosine permease (2.A.39) family.

The protein resides in the cytoplasm. It is found in the nucleus. Its subcellular location is the membrane. This is an uncharacterized protein from Schizosaccharomyces pombe (strain 972 / ATCC 24843) (Fission yeast).